A 532-amino-acid chain; its full sequence is Flavin-containing monooxygenase 3 (532 aa).

Residues 9–13 (GAGVS), E32, 40–41 (LW), and 61–62 (NS) each bind FAD. NADP(+) contacts are provided by residues 60 to 61 (SN) and 195 to 198 (SGCD). S401 carries the post-translational modification Phosphoserine. A helical membrane pass occupies residues 510-530 (FFFHWLKLFAIPILLIAVFLV).

The protein belongs to the FMO family. Requires FAD as cofactor. As to expression, liver.

It localises to the microsome membrane. The protein resides in the endoplasmic reticulum membrane. It carries out the reaction trimethylamine + NADPH + O2 = trimethylamine N-oxide + NADP(+) + H2O. The catalysed reaction is N,N-dimethylaniline + NADPH + O2 + H(+) = N,N-dimethylaniline N-oxide + NADP(+) + H2O. The enzyme catalyses hypotaurine + NADPH + O2 + H(+) = taurine + NADP(+) + H2O. It catalyses the reaction (S)-nicotine + NADPH + O2 = trans-(S)-nicotine N(1')-oxide + NADP(+) + H2O. It carries out the reaction albendazole + NADPH + O2 + H(+) = albendazole S-oxide + NADP(+) + H2O. In terms of biological role, essential hepatic enzyme that catalyzes the oxygenation of a wide variety of nitrogen- and sulfur-containing compounds including drugs as well as dietary compounds. Plays an important role in the metabolism of trimethylamine (TMA), via the production of trimethylamine N-oxide (TMAO) metabolite. TMA is generated by the action of gut microbiota using dietary precursors such as choline, choline containing compounds, betaine or L-carnitine. By regulating TMAO concentration, FMO3 directly impacts both platelet responsiveness and rate of thrombus formation. This Homo sapiens (Human) protein is Flavin-containing monooxygenase 3 (FMO3).